The following is a 181-amino-acid chain: Small acidic protein (181 aa).

The disordered stretch occupies residues 1–181 (MSAARESHPH…KMMFVKSSGS (181 aa)). Lys-13 participates in a covalent cross-link: Glycyl lysine isopeptide (Lys-Gly) (interchain with G-Cter in SUMO2). Phosphoserine occurs at positions 15 and 17. The segment covering 48-78 (GKKEHTGRLVIGDHKSTSHFRTGEEDKKINE) has biased composition (basic and acidic residues). A Glycyl lysine isopeptide (Lys-Gly) (interchain with G-Cter in SUMO2) cross-link involves residue Lys-62. Ser-63 carries the phosphoserine modification. A Glycyl lysine isopeptide (Lys-Gly) (interchain with G-Cter in SUMO2) cross-link involves residue Lys-75. Residues Ser-87, Ser-125, and Ser-145 each carry the phosphoserine modification. A compositionally biased stretch (acidic residues) spans 106 to 147 (EVDDHDGEGDVAGDDDDDDSPDPESPDDSESDSESEKEESTE). Residues 151-169 (AAEHPDEVEDSKNKKDAKS) are compositionally biased toward basic and acidic residues. N6-acetyllysine occurs at positions 172 and 177.

Belongs to the SMAP family.

This Bos taurus (Bovine) protein is Small acidic protein (SMAP).